Here is a 430-residue protein sequence, read N- to C-terminus: Adenylosuccinate synthetase (430 aa).

GTP contacts are provided by residues 13–19 (GDEGKGK) and 41–43 (GHT). Asp14 (proton acceptor) is an active-site residue. Asp14 and Gly41 together coordinate Mg(2+). Residues 14–17 (DEGK), 39–42 (NAGH), Thr130, Arg144, Gln225, Thr240, and Arg304 contribute to the IMP site. His42 functions as the Proton donor in the catalytic mechanism. Position 300–306 (300–306 (ATTGRKR)) interacts with substrate. Residues Arg306, 332–334 (KLD), and 414–416 (STG) contribute to the GTP site.

Belongs to the adenylosuccinate synthetase family. Homodimer. The cofactor is Mg(2+).

It is found in the cytoplasm. The catalysed reaction is IMP + L-aspartate + GTP = N(6)-(1,2-dicarboxyethyl)-AMP + GDP + phosphate + 2 H(+). It participates in purine metabolism; AMP biosynthesis via de novo pathway; AMP from IMP: step 1/2. Plays an important role in the de novo pathway of purine nucleotide biosynthesis. Catalyzes the first committed step in the biosynthesis of AMP from IMP. This is Adenylosuccinate synthetase from Teredinibacter turnerae (strain ATCC 39867 / T7901).